The following is a 509-amino-acid chain: Histidine ammonia-lyase (509 aa).

A cross-link (5-imidazolinone (Ala-Gly)) is located at residues 142–144; the sequence is ASG. Ser-143 bears the 2,3-didehydroalanine (Ser) mark.

Belongs to the PAL/histidase family. In terms of processing, contains an active site 4-methylidene-imidazol-5-one (MIO), which is formed autocatalytically by cyclization and dehydration of residues Ala-Ser-Gly.

It localises to the cytoplasm. It catalyses the reaction L-histidine = trans-urocanate + NH4(+). The protein operates within amino-acid degradation; L-histidine degradation into L-glutamate; N-formimidoyl-L-glutamate from L-histidine: step 1/3. This Pseudomonas aeruginosa (strain UCBPP-PA14) protein is Histidine ammonia-lyase.